Consider the following 671-residue polypeptide: UvrABC system protein C (671 aa).

Residues 16-95 (VEPGVYRFRD…IKEFDPRFNV (80 aa)) enclose the GIY-YIG domain. The UVR domain maps to 208–243 (DRLARDMEREMNQAAQELNFERAARLRDNISALQRA). The interval 645-671 (SSAPSSGATEAVLPAMVENGVDDTPST) is disordered.

Belongs to the UvrC family. Interacts with UvrB in an incision complex.

It localises to the cytoplasm. Functionally, the UvrABC repair system catalyzes the recognition and processing of DNA lesions. UvrC both incises the 5' and 3' sides of the lesion. The N-terminal half is responsible for the 3' incision and the C-terminal half is responsible for the 5' incision. The chain is UvrABC system protein C from Mycobacteroides abscessus (strain ATCC 19977 / DSM 44196 / CCUG 20993 / CIP 104536 / JCM 13569 / NCTC 13031 / TMC 1543 / L948) (Mycobacterium abscessus).